The sequence spans 571 residues: Urease subunit alpha (571 aa).

Positions 132 to 571 constitute a Urease domain; it reads GAIDTHIHFI…LPMGQKYFLF (440 aa). Ni(2+)-binding residues include His137, His139, and Lys220. Lys220 carries the N6-carboxylysine modification. His222 is a binding site for substrate. His249 and His275 together coordinate Ni(2+). His323 serves as the catalytic Proton donor. Position 363 (Asp363) interacts with Ni(2+).

This sequence belongs to the metallo-dependent hydrolases superfamily. Urease alpha subunit family. As to quaternary structure, heterotrimer of UreA (gamma), UreB (beta) and UreC (alpha) subunits. Three heterotrimers associate to form the active enzyme. It depends on Ni cation as a cofactor. In terms of processing, carboxylation allows a single lysine to coordinate two nickel ions.

The protein resides in the cytoplasm. The catalysed reaction is urea + 2 H2O + H(+) = hydrogencarbonate + 2 NH4(+). It participates in nitrogen metabolism; urea degradation; CO(2) and NH(3) from urea (urease route): step 1/1. The sequence is that of Urease subunit alpha from Corynebacterium urealyticum (strain ATCC 43042 / DSM 7109).